Here is a 51-residue protein sequence, read N- to C-terminus: uncharacterized protein (51 aa).

This is an uncharacterized protein from Grapevine leafroll-associated virus 3 (isolate United States/NY1) (GLRaV-3).